A 208-amino-acid polypeptide reads, in one-letter code: Transmembrane protein 222 (208 aa).

The segment at 1 to 26 (MAEAEGSSLLLLPPPPPPPRMAEVEA) is disordered. Topologically, residues 1–55 (MAEAEGSSLLLLPPPPPPPRMAEVEAPTAAETDMKQYQGSGGVAMDVERSRFPYC) are extracellular. The helical transmembrane segment at 56–76 (VVWTPIPVLTWFFPIIGHMGI) threads the bilayer. Residues 77–164 (CTSTGVIRDF…MRYNNSTNWN (88 aa)) are Cytoplasmic-facing. The helical transmembrane segment at 165 to 185 (MVTLCFFCLLYGKYVSVGAFV) threads the bilayer. Residue K186 is a topological domain, extracellular. The helical transmembrane segment at 187–207 (TWLPFILLLGIILTVSLVFNL) threads the bilayer. Position 208 (R208) is a topological domain, cytoplasmic.

As to expression, widely expressed. The highest expression is observed in the brain.

It is found in the membrane. It localises to the cell projection. The protein resides in the dendrite. The sequence is that of Transmembrane protein 222 (TMEM222) from Homo sapiens (Human).